The following is a 479-amino-acid chain: Probable periplasmic serine endoprotease DegP-like (479 aa).

A signal peptide spans 1-27 (MSIPRMKSYFSLIAAVLMLGQVATAQA). Positions 77–99 (LERSMPPGSRPPGAGKGDRQRET) are disordered. Catalysis depends on charge relay system residues His-119, Asp-149, and Ser-222. Substrate-binding positions include 220–222 (GNS) and 277–281 (LGVVI). 2 consecutive PDZ domains span residues 266-357 (LKAS…IRDG) and 363-468 (TVTV…LRQG).

Belongs to the peptidase S1C family.

The protein localises to the periplasm. It catalyses the reaction Acts on substrates that are at least partially unfolded. The cleavage site P1 residue is normally between a pair of hydrophobic residues, such as Val-|-Val.. Functionally, might be efficient in the degradation of transiently denatured and unfolded proteins which accumulate in the periplasm following stress conditions. The sequence is that of Probable periplasmic serine endoprotease DegP-like (mucD) from Pseudomonas savastanoi pv. phaseolicola (strain 1448A / Race 6) (Pseudomonas syringae pv. phaseolicola (strain 1448A / Race 6)).